Consider the following 783-residue polypeptide: Protein involved in starch initiation 1 (783 aa).

The transit peptide at 1–27 (MGFSQAIRLNLASFSSPSPCDYCLTRV) directs the protein to the chloroplast. 3 coiled-coil regions span residues 128–309 (LHDA…LKEE), 345–432 (LVFS…LELA), and 457–512 (LQEK…LKAL).

Interacts with PTST2; the interaction is essential for the initiation of starch granules biosynthesis in leaf chloroplasts. Interacts with SS4; the interaction is essential for the initiation of starch granules biosynthesis in leaf chloroplasts.

It localises to the plastid. The protein resides in the chloroplast. Its function is as follows. Required for the initiation of starch granules biosynthesis in leaf chloroplasts. Involved in determining starch granule number and size in chloroplasts. The chain is Protein involved in starch initiation 1 from Arabidopsis thaliana (Mouse-ear cress).